The following is a 287-amino-acid chain: Aromatic amino acid exporter YddG (287 aa).

The Cytoplasmic portion of the chain corresponds to 1–5 (MSRSS). A helical transmembrane segment spans residues 6-24 (ATLIGFTAILLWSTLALAT). In terms of domain architecture, EamA 1 spans 7–136 (TLIGFTAILL…MGLAGTVVLL (130 aa)). Topologically, residues 25–31 (SSTGAVP) are periplasmic. The chain crosses the membrane as a helical span at residues 32-54 (PFLLTALTFTIGGAVGIAAGLAR). The Cytoplasmic portion of the chain corresponds to 55 to 65 (GVGLSVLRQPW). A helical membrane pass occupies residues 66–86 (PVWVHGIGGLFGYHFFYFSAL). Over 87-90 (KLAP) the chain is Periplasmic. Residues 91-111 (PAEAGLVAYLWPLLIVLFSAF) form a helical membrane-spanning segment. At 112 to 118 (LPGERLR) the chain is on the cytoplasmic side. Residues 119 to 139 (PAHVAGALMGLAGTVVLLGAR) form a helical membrane-spanning segment. Topologically, residues 140-149 (AGGFGFAPEY) are periplasmic. The helical transmembrane segment at 150 to 170 (VPGYLAAAACAVIWSVYSVAS) threads the bilayer. The 131-residue stretch at 151–281 (PGYLAAAACA…ALIVGGAAVA (131 aa)) folds into the EamA 2 domain. The Cytoplasmic portion of the chain corresponds to 171 to 176 (RRFARV). A helical membrane pass occupies residues 177-198 (PTEVVAGFCLATAALSALCHIL). Residues 199–208 (FEPSVWPVGS) are Periplasmic-facing. A helical transmembrane segment spans residues 209-233 (EWLAVVALGIGPVGIAFYTWDIGMK). Residues 234–236 (RGD) are Cytoplasmic-facing. A helical membrane pass occupies residues 237-258 (VRLLGVLSYAAPVLSTLLLVVA). At 259–264 (GFAAPS) the chain is on the periplasmic side. The helical transmembrane segment at 265 to 284 (GALAIACALIVGGAAVATLL) threads the bilayer. Residues 285-287 (ARR) are Cytoplasmic-facing.

The protein belongs to the drug/metabolite transporter (DMT) superfamily. Aromatic amino acid/paraquat exporter (ArAA/P-E) (TC 2.A.7.17) family.

It is found in the cell inner membrane. It carries out the reaction L-threonine(in) = L-threonine(out). The catalysed reaction is L-methionine(in) = L-methionine(out). It catalyses the reaction L-lysine(in) = L-lysine(out). The enzyme catalyses L-glutamate(out) = L-glutamate(in). Its function is as follows. Amino acid transporter with broad substrate specificity. Can transport various amino acids, including L-threonine, L-methionine, L-lysine and L-glutamate. The protein is Aromatic amino acid exporter YddG of Ancylobacter novellus (strain ATCC 8093 / DSM 506 / JCM 20403 / CCM 1077 / IAM 12100 / NBRC 12443 / NCIMB 10456) (Starkeya novella).